The primary structure comprises 452 residues: Phosphoglucosamine mutase (452 aa).

Catalysis depends on Ser-101, which acts as the Phosphoserine intermediate. Positions 101, 241, 243, and 245 each coordinate Mg(2+). The residue at position 101 (Ser-101) is a Phosphoserine.

This sequence belongs to the phosphohexose mutase family. The cofactor is Mg(2+). Activated by phosphorylation.

The catalysed reaction is alpha-D-glucosamine 1-phosphate = D-glucosamine 6-phosphate. Its function is as follows. Catalyzes the conversion of glucosamine-6-phosphate to glucosamine-1-phosphate. The polypeptide is Phosphoglucosamine mutase (Lactococcus lactis subsp. lactis (strain IL1403) (Streptococcus lactis)).